We begin with the raw amino-acid sequence, 627 residues long: Plastin-3 (627 aa).

EF-hand domains follow at residues Glu8–Pro43 and Lys48–Gly83. Positions 21, 23, 25, 32, 61, 63, 65, 67, and 72 each coordinate Ca(2+). Actin-binding stretches follow at residues Thr105–Lys378 and Pro379–Met624. 4 consecutive Calponin-homology (CH) domains span residues Glu119–Leu235, Leu263–Pro374, Thr393–Thr503, and Lys515–Met624.

The protein localises to the cytoplasm. Its function is as follows. Actin-bundling protein. In Danio rerio (Zebrafish), this protein is Plastin-3 (pls3).